Consider the following 1116-residue polypeptide: Error-prone DNA polymerase (1116 aa).

It belongs to the DNA polymerase type-C family. DnaE2 subfamily.

The protein localises to the cytoplasm. It carries out the reaction DNA(n) + a 2'-deoxyribonucleoside 5'-triphosphate = DNA(n+1) + diphosphate. Functionally, DNA polymerase involved in damage-induced mutagenesis and translesion synthesis (TLS). It is not the major replicative DNA polymerase. This is Error-prone DNA polymerase from Sinorhizobium medicae (strain WSM419) (Ensifer medicae).